The primary structure comprises 347 residues: Histidinol-phosphate aminotransferase (347 aa).

The residue at position 209 (Lys-209) is an N6-(pyridoxal phosphate)lysine.

The protein belongs to the class-II pyridoxal-phosphate-dependent aminotransferase family. Histidinol-phosphate aminotransferase subfamily. In terms of assembly, homodimer. Pyridoxal 5'-phosphate is required as a cofactor.

It carries out the reaction L-histidinol phosphate + 2-oxoglutarate = 3-(imidazol-4-yl)-2-oxopropyl phosphate + L-glutamate. It participates in amino-acid biosynthesis; L-histidine biosynthesis; L-histidine from 5-phospho-alpha-D-ribose 1-diphosphate: step 7/9. The protein is Histidinol-phosphate aminotransferase of Syntrophotalea carbinolica (strain DSM 2380 / NBRC 103641 / GraBd1) (Pelobacter carbinolicus).